The chain runs to 98 residues: Acylphosphatase (98 aa).

Residues 12 to 98 (TYYVRVRGVV…ERRFDRFQQQ (87 aa)) form the Acylphosphatase-like domain. Residues Arg27 and Asn45 contribute to the active site.

This sequence belongs to the acylphosphatase family.

It carries out the reaction an acyl phosphate + H2O = a carboxylate + phosphate + H(+). The sequence is that of Acylphosphatase (acyP) from Burkholderia ambifaria (strain ATCC BAA-244 / DSM 16087 / CCUG 44356 / LMG 19182 / AMMD) (Burkholderia cepacia (strain AMMD)).